We begin with the raw amino-acid sequence, 323 residues long: Cyclin-H (323 aa).

Phosphoserine; by CDK8 is present on serine 5. At serine 132 the chain carries Phosphoserine. The tract at residues 295 to 323 (KGYEDDDYVSKKPKQEEEEWTDDDLVDSL) is disordered. The residue at position 304 (serine 304) is a Phosphoserine; by CDK8. Over residues 310–323 (EEEEWTDDDLVDSL) the composition is skewed to acidic residues. A Phosphothreonine modification is found at threonine 315. A Phosphoserine modification is found at serine 322.

The protein belongs to the cyclin family. Cyclin C subfamily. Associates primarily with CDK7 and MAT1 to form the CAK complex. CAK can further associate with the core-TFIIH to form the TFIIH basal transcription factor. In terms of tissue distribution, expressed in both the germinal and somatic cells of the testis.

The protein localises to the nucleus. Functionally, regulates CDK7, the catalytic subunit of the CDK-activating kinase (CAK) enzymatic complex. CAK activates the cyclin-associated kinases CDK1, CDK2, CDK4 and CDK6 by threonine phosphorylation. CAK complexed to the core-TFIIH basal transcription factor activates RNA polymerase II by serine phosphorylation of the repetitive C-terminal domain (CTD) of its large subunit (POLR2A), allowing its escape from the promoter and elongation of the transcripts. Involved in cell cycle control and in RNA transcription by RNA polymerase II. Its expression and activity are constant throughout the cell cycle. The chain is Cyclin-H (Ccnh) from Mus musculus (Mouse).